We begin with the raw amino-acid sequence, 1066 residues long: MPKNNNIKKVLVIGSGPIVIGQAAEFDYAGTQACRSLKEEGVTVVLVNSNPATIMTDKDIADMVYIEPLTPDVVKKIILKEKPDSVLPTLGGQAALNIAMELEESGFLAETGTKLIGTTSLTIKKAEDRLEFKNTMEKIGEPCAASVVVTTVPAAVDFAETIGYPVVIRPAYTLGGSGGGIAADKEELIDICTNGLRLSRVGQCLIERCIAGWKEIEYEVMRDGAGNCITVCNMENLDPVGVHTGDSIVVAPSQTLSDKEYQMLRTSALNIITEINITGGCNVQYALKPDSFEYCVIEVNPRVSRSSALASKATGYPIAKVAAKIALGYTLDEIPNAITGKTVASFEPALDYCVVKIPKWPFDKFIMAKRTLTTQMKATGEVMSICTNFEGALMKAVRSLEQNIYSMNYGDYSKDSVEDIREKLHLIDDRRIFVIAEAIRRGITPEEINDITKIDLWFIDKIAILTEMEKRLSEEPLTKELMLEAKRMEFPDRVIAQFSGKTLEEVKKLRKEEYEIHAAFKTVDTCAAEFEAQTPYYYSCFDSENEVDATKTKKKVLVLGSGPIRIGQGIEFDYCSVHATWSMSKSGFETIIVNNNPETVSTDFDIADKLYFEPLTPEDVENIVDLEQPDGAVVQFGGQTAIKLTEALLKMGVPILGTSAENVDAAEDRELFDEILEKCCIPRPAGKTVFTTEEAIVAANQLGYPVLVRPSYVLGGAGMQIAICDDDVREFMEIINRNVQEHPILVDKYLMGKEVEVDAVCDGEDILIPGIMEHIERAGIHSGDSISVYPAQSISNKVQDVIVDYTRKLAKSLNVIGLINIQFIVYNEEVYVIEVNPRSSRTVPYISKVTNIPIVSLASKAVLGEKIADLGYGTGLAKKADYIAIKMPVFSFEKLRGADIGLGPEMKSTGECLGIAKTFNEALYKAFLGAGINLPKHKKMILTVKDADKLEAVSVGRRFKALGYEIYATRSTARVLKENGVDAIPVQKVDGESPTILDLLLGHEIDLVVDTPTQGRDKSRDGFVIRRMSIETGVTCLTSLDTANALLTSLENVADGELSLIDIARI.

The segment at 1-401 is carboxyphosphate synthetic domain; the sequence is MPKNNNIKKV…ALMKAVRSLE (401 aa). Positions 129, 169, 175, 176, 208, 210, 215, 241, 242, 243, 284, and 298 each coordinate ATP. Positions 133-327 constitute an ATP-grasp 1 domain; sequence KNTMEKIGEP…IAKVAAKIAL (195 aa). Mg(2+) is bound by residues glutamine 284, glutamate 298, and asparagine 300. Glutamine 284, glutamate 298, and asparagine 300 together coordinate Mn(2+). Residues 402–547 form an oligomerization domain region; that stretch reads QNIYSMNYGD…YSCFDSENEV (146 aa). The carbamoyl phosphate synthetic domain stretch occupies residues 548–931; it reads DATKTKKKVL…ALYKAFLGAG (384 aa). Residues 673 to 863 form the ATP-grasp 2 domain; it reads DEILEKCCIP…IVSLASKAVL (191 aa). ATP contacts are provided by arginine 709, lysine 748, leucine 750, glutamate 754, glycine 779, isoleucine 780, histidine 781, serine 782, glutamine 822, and glutamate 834. 3 residues coordinate Mg(2+): glutamine 822, glutamate 834, and asparagine 836. Mn(2+) is bound by residues glutamine 822, glutamate 834, and asparagine 836. The MGS-like domain occupies 932–1066; it reads INLPKHKKMI…ELSLIDIARI (135 aa). The tract at residues 932-1066 is allosteric domain; that stretch reads INLPKHKKMI…ELSLIDIARI (135 aa).

Belongs to the CarB family. As to quaternary structure, composed of two chains; the small (or glutamine) chain promotes the hydrolysis of glutamine to ammonia, which is used by the large (or ammonia) chain to synthesize carbamoyl phosphate. Tetramer of heterodimers (alpha,beta)4. Mg(2+) serves as cofactor. Mn(2+) is required as a cofactor.

The enzyme catalyses hydrogencarbonate + L-glutamine + 2 ATP + H2O = carbamoyl phosphate + L-glutamate + 2 ADP + phosphate + 2 H(+). It carries out the reaction hydrogencarbonate + NH4(+) + 2 ATP = carbamoyl phosphate + 2 ADP + phosphate + 2 H(+). It functions in the pathway amino-acid biosynthesis; L-arginine biosynthesis; carbamoyl phosphate from bicarbonate: step 1/1. The protein operates within pyrimidine metabolism; UMP biosynthesis via de novo pathway; (S)-dihydroorotate from bicarbonate: step 1/3. In terms of biological role, large subunit of the glutamine-dependent carbamoyl phosphate synthetase (CPSase). CPSase catalyzes the formation of carbamoyl phosphate from the ammonia moiety of glutamine, carbonate, and phosphate donated by ATP, constituting the first step of 2 biosynthetic pathways, one leading to arginine and/or urea and the other to pyrimidine nucleotides. The large subunit (synthetase) binds the substrates ammonia (free or transferred from glutamine from the small subunit), hydrogencarbonate and ATP and carries out an ATP-coupled ligase reaction, activating hydrogencarbonate by forming carboxy phosphate which reacts with ammonia to form carbamoyl phosphate. The sequence is that of Carbamoyl phosphate synthase large chain from Lachnoclostridium phytofermentans (strain ATCC 700394 / DSM 18823 / ISDg) (Clostridium phytofermentans).